A 327-amino-acid chain; its full sequence is Ribosomal RNA large subunit methyltransferase F (327 aa).

The protein belongs to the methyltransferase superfamily. METTL16/RlmF family.

The protein resides in the cytoplasm. It catalyses the reaction adenosine(1618) in 23S rRNA + S-adenosyl-L-methionine = N(6)-methyladenosine(1618) in 23S rRNA + S-adenosyl-L-homocysteine + H(+). In terms of biological role, specifically methylates the adenine in position 1618 of 23S rRNA. This chain is Ribosomal RNA large subunit methyltransferase F, found in Marinomonas sp. (strain MWYL1).